The primary structure comprises 363 residues: RNA polymerase II holoenzyme cyclin-like subunit (363 aa).

In terms of domain architecture, Cyclin N-terminal spans 53–143 (YQMLRLAKNL…IGECEFWLIS (91 aa)). Residues 252-312 (TPGGSGSPAM…SPQKEKSKLQ (61 aa)) form a disordered region. Residues 265–276 (IQQNPPNQAYQL) show a composition bias toward polar residues. The segment covering 277–298 (TPQQQEMFRQQQMQQQNRQPET) has biased composition (low complexity). Residues 299-310 (QAKDSPQKEKSK) are compositionally biased toward basic and acidic residues.

Belongs to the cyclin family. Cyclin C subfamily. As to quaternary structure, component of the SRB8-11 complex, a regulatory module of the Mediator complex.

The protein localises to the nucleus. Component of the SRB8-11 complex. The SRB8-11 complex is a regulatory module of the Mediator complex which is itself involved in regulation of basal and activated RNA polymerase II-dependent transcription. The SRB8-11 complex may be involved in the transcriptional repression of a subset of genes regulated by Mediator. It may inhibit the association of the Mediator complex with RNA polymerase II to form the holoenzyme complex. The SRB8-11 complex phosphorylates the C-terminal domain (CTD) of the largest subunit of RNA polymerase II. The polypeptide is RNA polymerase II holoenzyme cyclin-like subunit (SSN8) (Pyricularia oryzae (strain 70-15 / ATCC MYA-4617 / FGSC 8958) (Rice blast fungus)).